The chain runs to 458 residues: Ribulose bisphosphate carboxylase large chain (458 aa).

Residue Lys7 is modified to N6,N6,N6-trimethyllysine. Substrate is bound by residues Asn116 and Thr166. The active-site Proton acceptor is Lys168. Lys170 is a substrate binding site. Mg(2+)-binding residues include Lys194, Asp196, and Glu197. An N6-carboxylysine modification is found at Lys194. Catalysis depends on His287, which acts as the Proton acceptor. 3 residues coordinate substrate: Arg288, His320, and Ser372.

This sequence belongs to the RuBisCO large chain family. Type I subfamily. In terms of assembly, heterohexadecamer of 8 large chains and 8 small chains; disulfide-linked. The disulfide link is formed within the large subunit homodimers. Requires Mg(2+) as cofactor. In terms of processing, the disulfide bond which can form in the large chain dimeric partners within the hexadecamer appears to be associated with oxidative stress and protein turnover.

The protein resides in the plastid. It is found in the chloroplast. It carries out the reaction 2 (2R)-3-phosphoglycerate + 2 H(+) = D-ribulose 1,5-bisphosphate + CO2 + H2O. The enzyme catalyses D-ribulose 1,5-bisphosphate + O2 = 2-phosphoglycolate + (2R)-3-phosphoglycerate + 2 H(+). In terms of biological role, ruBisCO catalyzes two reactions: the carboxylation of D-ribulose 1,5-bisphosphate, the primary event in carbon dioxide fixation, as well as the oxidative fragmentation of the pentose substrate in the photorespiration process. Both reactions occur simultaneously and in competition at the same active site. The protein is Ribulose bisphosphate carboxylase large chain of Gladiolus gueinzii (Coastal gladiolus).